Here is a 456-residue protein sequence, read N- to C-terminus: Bifunctional protein GlmU (456 aa).

The tract at residues 1–229 (MLNNAMSVVI…LSEVEGVNNR (229 aa)) is pyrophosphorylase. UDP-N-acetyl-alpha-D-glucosamine contacts are provided by residues 11 to 14 (LAAG), Lys25, Gln76, 81 to 82 (GT), 103 to 105 (YGD), Gly140, Glu154, Asn169, and Asn227. Residue Asp105 participates in Mg(2+) binding. Asn227 serves as a coordination point for Mg(2+). The linker stretch occupies residues 230–250 (LQLSRLERVYQSEQAEKLLLA). An N-acetyltransferase region spans residues 251-456 (GVMLRDPARF…EGWRRPVKKK (206 aa)). 2 residues coordinate UDP-N-acetyl-alpha-D-glucosamine: Arg333 and Lys351. His363 serves as the catalytic Proton acceptor. The UDP-N-acetyl-alpha-D-glucosamine site is built by Tyr366 and Asn377. Acetyl-CoA is bound by residues Ala380, 386–387 (NY), Ser405, Ala423, and Arg440.

This sequence in the N-terminal section; belongs to the N-acetylglucosamine-1-phosphate uridyltransferase family. In the C-terminal section; belongs to the transferase hexapeptide repeat family. As to quaternary structure, homotrimer. Requires Mg(2+) as cofactor.

It localises to the cytoplasm. It catalyses the reaction alpha-D-glucosamine 1-phosphate + acetyl-CoA = N-acetyl-alpha-D-glucosamine 1-phosphate + CoA + H(+). It carries out the reaction N-acetyl-alpha-D-glucosamine 1-phosphate + UTP + H(+) = UDP-N-acetyl-alpha-D-glucosamine + diphosphate. Its pathway is nucleotide-sugar biosynthesis; UDP-N-acetyl-alpha-D-glucosamine biosynthesis; N-acetyl-alpha-D-glucosamine 1-phosphate from alpha-D-glucosamine 6-phosphate (route II): step 2/2. It functions in the pathway nucleotide-sugar biosynthesis; UDP-N-acetyl-alpha-D-glucosamine biosynthesis; UDP-N-acetyl-alpha-D-glucosamine from N-acetyl-alpha-D-glucosamine 1-phosphate: step 1/1. The protein operates within bacterial outer membrane biogenesis; LPS lipid A biosynthesis. In terms of biological role, catalyzes the last two sequential reactions in the de novo biosynthetic pathway for UDP-N-acetylglucosamine (UDP-GlcNAc). The C-terminal domain catalyzes the transfer of acetyl group from acetyl coenzyme A to glucosamine-1-phosphate (GlcN-1-P) to produce N-acetylglucosamine-1-phosphate (GlcNAc-1-P), which is converted into UDP-GlcNAc by the transfer of uridine 5-monophosphate (from uridine 5-triphosphate), a reaction catalyzed by the N-terminal domain. This Escherichia coli (strain 55989 / EAEC) protein is Bifunctional protein GlmU.